A 183-amino-acid chain; its full sequence is Adenine phosphoribosyltransferase (183 aa).

The protein belongs to the purine/pyrimidine phosphoribosyltransferase family. In terms of assembly, homodimer.

It is found in the cytoplasm. It catalyses the reaction AMP + diphosphate = 5-phospho-alpha-D-ribose 1-diphosphate + adenine. The protein operates within purine metabolism; AMP biosynthesis via salvage pathway; AMP from adenine: step 1/1. In terms of biological role, catalyzes a salvage reaction resulting in the formation of AMP, that is energically less costly than de novo synthesis. In Salmonella typhi, this protein is Adenine phosphoribosyltransferase.